The following is a 95-amino-acid chain: UPF0223 protein Bsph_1378 (95 aa).

This sequence belongs to the UPF0223 family.

This Lysinibacillus sphaericus (strain C3-41) protein is UPF0223 protein Bsph_1378.